Here is a 523-residue protein sequence, read N- to C-terminus: Mogroside I-A1 synthase (523 aa).

The Proton acceptor role is filled by H39. The active-site Charge relay is D136. Positions 311, 374, 392, 393, 394, 397, 413, and 414 each coordinate UDP-alpha-D-glucose.

The protein belongs to the UDP-glycosyltransferase family. As to expression, highly expressed in young fruits 15 and 34 days after anthesis (15-DAA and 34-DAA).

The catalysed reaction is mogrol + UDP-alpha-D-glucose = mogroside I-A1 + UDP + H(+). It carries out the reaction mogroside I-A1 + UDP-alpha-D-glucose = mogroside IIE + UDP + H(+). It catalyses the reaction mogroside IE + UDP-alpha-D-glucose = mogroside IIE + UDP + H(+). The enzyme catalyses mogroside II-A1 + UDP-alpha-D-glucose = mogroside IIIX + UDP + H(+). The catalysed reaction is mogroside II-A + UDP-alpha-D-glucose = mogroside III + UDP + H(+). It carries out the reaction mogroside IIE + UDP-alpha-D-glucose = mogroside III-C3(1-&gt;6) + UDP + H(+). It catalyses the reaction mogroside III + UDP-alpha-D-glucose = isomogroside IV + UDP + H(+). The enzyme catalyses mogroside III + UDP-alpha-D-glucose = mogroside IV + UDP + H(+). The catalysed reaction is mogroside IIIX + UDP-alpha-D-glucose = mogroside IVA + UDP + H(+). It carries out the reaction siamenoside I + UDP-alpha-D-glucose = isomogroside V + UDP + H(+). Its pathway is secondary metabolite biosynthesis; terpenoid biosynthesis. In terms of biological role, UDP-glycosyltransferase involved in the biosynthesis of cucurbitacin and mogroside tetracyclic triterpene natural products (e.g. siamenoside I and mogrosides IV, V and VI). Cucurbitacins have cytotoxic properties and exhibit deterrent taste as a defense barrier against herbivores. Mogrosides are nonsugar highly oxygenated compounds used as high-intensity zero-calorie sweeteners; they also possess pharmacological properties such as regulating immunity, lowering blood sugar and lipid levels, protecting the liver, and acting as antioxidants and antitumor agents. Catalyzes the C24 primary glucosylation of mogrol and mogroside I-E1, and the C3 primary glucosylation of mogroside I-A1, mogroside II-A1 and mogroside II-A. Also supports branching glucosylations of mogroside II-E, mogroside III, mogroside IIIx and siamenoside I. This is Mogroside I-A1 synthase from Siraitia grosvenorii (Monk's fruit).